Here is a 290-residue protein sequence, read N- to C-terminus: MKIRIAARGSKLSLKQVEIVTTYLQAKGYETEFIEIKTKADLFGNKPLHEIGKGVFEKEVNEAVLQGRADIAVHSMKDMSSELPPGLELLATPKRENPVDVLVSELNLEELPEKSRIGTGSLRRANFLKVVRPDLVVENIRGNVDTRLRKYRDHEYDGIILAEAGLRRLGVEVKRFPLDVESFTPEPNQGIIAVVGSPKFLGLFQELNDTGTMKEALAEKETVKVVGGGCHSPLGVLFRLEDDVLHGIASYSNGVKRVTVKLSTRESPQIAGNQLGKALVKAMKDEGLIP.

At Cys230 the chain carries S-(dipyrrolylmethanemethyl)cysteine.

It belongs to the HMBS family. Requires dipyrromethane as cofactor.

The catalysed reaction is 4 porphobilinogen + H2O = hydroxymethylbilane + 4 NH4(+). The protein operates within porphyrin-containing compound metabolism; protoporphyrin-IX biosynthesis; coproporphyrinogen-III from 5-aminolevulinate: step 2/4. In terms of biological role, tetrapolymerization of the monopyrrole PBG into the hydroxymethylbilane pre-uroporphyrinogen in several discrete steps. In Metallosphaera sedula (strain ATCC 51363 / DSM 5348 / JCM 9185 / NBRC 15509 / TH2), this protein is Probable porphobilinogen deaminase.